A 217-amino-acid chain; its full sequence is Cytochrome c biogenesis ATP-binding export protein CcmA (217 aa).

Residues 16–214 (LVLEQLSCER…AHGQAEVTEG (199 aa)) enclose the ABC transporter domain. An ATP-binding site is contributed by 48–55 (GANGAGKT).

Belongs to the ABC transporter superfamily. CcmA exporter (TC 3.A.1.107) family. In terms of assembly, the complex is composed of two ATP-binding proteins (CcmA) and two transmembrane proteins (CcmB).

The protein resides in the cell inner membrane. The enzyme catalyses heme b(in) + ATP + H2O = heme b(out) + ADP + phosphate + H(+). Functionally, part of the ABC transporter complex CcmAB involved in the biogenesis of c-type cytochromes; once thought to export heme, this seems not to be the case, but its exact role is uncertain. Responsible for energy coupling to the transport system. The protein is Cytochrome c biogenesis ATP-binding export protein CcmA of Alcanivorax borkumensis (strain ATCC 700651 / DSM 11573 / NCIMB 13689 / SK2).